The sequence spans 132 residues: Small ribosomal subunit protein uS8 (132 aa).

This sequence belongs to the universal ribosomal protein uS8 family. As to quaternary structure, part of the 30S ribosomal subunit. Contacts proteins S5 and S12.

Its function is as follows. One of the primary rRNA binding proteins, it binds directly to 16S rRNA central domain where it helps coordinate assembly of the platform of the 30S subunit. This Streptococcus pyogenes serotype M49 (strain NZ131) protein is Small ribosomal subunit protein uS8.